The following is a 474-amino-acid chain: Cysteine--tRNA ligase (474 aa).

Cys27 is a binding site for Zn(2+). Residues 29–39 (PTVYNYIHIGN) carry the 'HIGH' region motif. The Zn(2+) site is built by Cys212, His237, and Glu241. The short motif at 271 to 275 (KMSKS) is the 'KMSKS' region element. Lys274 lines the ATP pocket.

Belongs to the class-I aminoacyl-tRNA synthetase family. Monomer. It depends on Zn(2+) as a cofactor.

The protein localises to the cytoplasm. The enzyme catalyses tRNA(Cys) + L-cysteine + ATP = L-cysteinyl-tRNA(Cys) + AMP + diphosphate. This Lactobacillus delbrueckii subsp. bulgaricus (strain ATCC 11842 / DSM 20081 / BCRC 10696 / JCM 1002 / NBRC 13953 / NCIMB 11778 / NCTC 12712 / WDCM 00102 / Lb 14) protein is Cysteine--tRNA ligase.